Here is a 476-residue protein sequence, read N- to C-terminus: Sulfate adenylyltransferase subunit 1 (476 aa).

Residues 24–243 form the tr-type G domain; sequence KSLLRFLTCG…VDVEKEKEAG (220 aa). A G1 region spans residues 33–40; it reads GSVDDGKS. Residue 33 to 40 participates in GTP binding; the sequence is GSVDDGKS. Residues 91 to 95 form a G2 region; the sequence is GITID. The tract at residues 112–115 is G3; it reads DTPG. GTP contacts are provided by residues 112–116 and 167–170; these read DTPGH and NKMD. A G4 region spans residues 167-170; sequence NKMD. Residues 205–207 form a G5 region; sequence SAL.

It belongs to the TRAFAC class translation factor GTPase superfamily. Classic translation factor GTPase family. CysN/NodQ subfamily. In terms of assembly, heterodimer composed of CysD, the smaller subunit, and CysN.

It catalyses the reaction sulfate + ATP + H(+) = adenosine 5'-phosphosulfate + diphosphate. Its pathway is sulfur metabolism; hydrogen sulfide biosynthesis; sulfite from sulfate: step 1/3. Functionally, with CysD forms the ATP sulfurylase (ATPS) that catalyzes the adenylation of sulfate producing adenosine 5'-phosphosulfate (APS) and diphosphate, the first enzymatic step in sulfur assimilation pathway. APS synthesis involves the formation of a high-energy phosphoric-sulfuric acid anhydride bond driven by GTP hydrolysis by CysN coupled to ATP hydrolysis by CysD. The protein is Sulfate adenylyltransferase subunit 1 of Vibrio vulnificus (strain YJ016).